Consider the following 413-residue polypeptide: Glucose-1-phosphate adenylyltransferase (413 aa).

Alpha-D-glucose 1-phosphate contacts are provided by residues G163, 179–180, and S197; that span reads EK.

This sequence belongs to the bacterial/plant glucose-1-phosphate adenylyltransferase family. In terms of assembly, homotetramer.

It catalyses the reaction alpha-D-glucose 1-phosphate + ATP + H(+) = ADP-alpha-D-glucose + diphosphate. The protein operates within glycan biosynthesis; glycogen biosynthesis. Functionally, involved in the biosynthesis of ADP-glucose, a building block required for the elongation reactions to produce glycogen. Catalyzes the reaction between ATP and alpha-D-glucose 1-phosphate (G1P) to produce pyrophosphate and ADP-Glc. The sequence is that of Glucose-1-phosphate adenylyltransferase from Parafrankia sp. (strain EAN1pec).